The sequence spans 132 residues: Small ribosomal subunit protein uS11 (132 aa).

This sequence belongs to the universal ribosomal protein uS11 family. As to quaternary structure, part of the 30S ribosomal subunit. Interacts with proteins S7 and S18. Binds to IF-3.

In terms of biological role, located on the platform of the 30S subunit, it bridges several disparate RNA helices of the 16S rRNA. Forms part of the Shine-Dalgarno cleft in the 70S ribosome. The protein is Small ribosomal subunit protein uS11 of Leifsonia xyli subsp. xyli (strain CTCB07).